Consider the following 677-residue polypeptide: Methionine--tRNA ligase (677 aa).

Positions Pro15–His25 match the 'HIGH' region motif. The Zn(2+) site is built by Cys146, Cys149, Cys159, and Cys162. The short motif at Lys333–Ser337 is the 'KMSKS' region element. Lys336 lines the ATP pocket. Residues Asp576 to Lys677 form the tRNA-binding domain.

The protein belongs to the class-I aminoacyl-tRNA synthetase family. MetG type 1 subfamily. In terms of assembly, homodimer. Requires Zn(2+) as cofactor.

Its subcellular location is the cytoplasm. It carries out the reaction tRNA(Met) + L-methionine + ATP = L-methionyl-tRNA(Met) + AMP + diphosphate. Functionally, is required not only for elongation of protein synthesis but also for the initiation of all mRNA translation through initiator tRNA(fMet) aminoacylation. The protein is Methionine--tRNA ligase of Aeromonas hydrophila subsp. hydrophila (strain ATCC 7966 / DSM 30187 / BCRC 13018 / CCUG 14551 / JCM 1027 / KCTC 2358 / NCIMB 9240 / NCTC 8049).